A 160-amino-acid polypeptide reads, in one-letter code: Protein MGF 300-2R (160 aa).

It belongs to the asfivirus MGF 300 family.

Plays a role in virus cell tropism, and may be required for efficient virus replication in macrophages. This is Protein MGF 300-2R from African swine fever virus (isolate Tick/South Africa/Pretoriuskop Pr4/1996) (ASFV).